Consider the following 197-residue polypeptide: Peptidyl-tRNA hydrolase (197 aa).

Tyr17 contributes to the tRNA binding site. Catalysis depends on His22, which acts as the Proton acceptor. The tRNA site is built by Phe68, Asn70, and Asn116.

The protein belongs to the PTH family. As to quaternary structure, monomer.

It localises to the cytoplasm. It catalyses the reaction an N-acyl-L-alpha-aminoacyl-tRNA + H2O = an N-acyl-L-amino acid + a tRNA + H(+). In terms of biological role, hydrolyzes ribosome-free peptidyl-tRNAs (with 1 or more amino acids incorporated), which drop off the ribosome during protein synthesis, or as a result of ribosome stalling. Its function is as follows. Catalyzes the release of premature peptidyl moieties from peptidyl-tRNA molecules trapped in stalled 50S ribosomal subunits, and thus maintains levels of free tRNAs and 50S ribosomes. The sequence is that of Peptidyl-tRNA hydrolase from Yersinia enterocolitica serotype O:8 / biotype 1B (strain NCTC 13174 / 8081).